Reading from the N-terminus, the 140-residue chain is Transcription antitermination protein NusB (140 aa).

It belongs to the NusB family.

In terms of biological role, involved in transcription antitermination. Required for transcription of ribosomal RNA (rRNA) genes. Binds specifically to the boxA antiterminator sequence of the ribosomal RNA (rrn) operons. The polypeptide is Transcription antitermination protein NusB (Streptococcus pneumoniae (strain JJA)).